The chain runs to 280 residues: Large ribosomal subunit protein uL2 (280 aa).

Residues 229-280 (DHPHGGGEGKAPIGHPSPLTPWGKPTLGYKTRKKRKPSDRFIIQRANDKKEK) are disordered.

The protein belongs to the universal ribosomal protein uL2 family. As to quaternary structure, part of the 50S ribosomal subunit. Forms a bridge to the 30S subunit in the 70S ribosome.

One of the primary rRNA binding proteins. Required for association of the 30S and 50S subunits to form the 70S ribosome, for tRNA binding and peptide bond formation. It has been suggested to have peptidyltransferase activity; this is somewhat controversial. Makes several contacts with the 16S rRNA in the 70S ribosome. In Dictyoglomus turgidum (strain DSM 6724 / Z-1310), this protein is Large ribosomal subunit protein uL2.